A 426-amino-acid polypeptide reads, in one-letter code: MTRTNLDFLTETDPAIAGLLQQELQRQQDHLELIASENFTSAAVLAAQGSVLTNKYAEGLPGKRYYGGCEYIDKVEQLAIDRAKDLFQAAHANVQPHSGAQANFAVFLALLQPGDTIMGMDLSHGGHLTHGSPVNVSGKWFRVVHYGVDPVTEQLDYEKIRQLAHQHRPKLIICGYSAYPRIIQFDQFRAIADEVGAYLLADMAHIAGLVATGHHPSPIPVCDVVTTTTHKTLRGPRGGLILTRDPELGKKLDKAVFPGNQGGPLEHVIAAKAVAFGEALRPEFKTYSAQVIKNAQALSQQLQQRGFKIVSNGTDNHLLLVDLRSIGMTGKLADQLVSEVNITANKNTVPFDPESPFVTSGLRLGSAAMTTRGMGTPEFIEIANIIADRLLNPEDLAIVQECRQRVAQLCDRFPLYPHLSRVPVLS.

(6S)-5,6,7,8-tetrahydrofolate-binding positions include leucine 122 and glycine 126 to leucine 128. An N6-(pyridoxal phosphate)lysine modification is found at lysine 231. (6S)-5,6,7,8-tetrahydrofolate-binding positions include glutamate 247 and serine 355–phenylalanine 357.

The protein belongs to the SHMT family. Homodimer. The cofactor is pyridoxal 5'-phosphate.

Its subcellular location is the cytoplasm. The enzyme catalyses (6R)-5,10-methylene-5,6,7,8-tetrahydrofolate + glycine + H2O = (6S)-5,6,7,8-tetrahydrofolate + L-serine. The protein operates within one-carbon metabolism; tetrahydrofolate interconversion. It participates in amino-acid biosynthesis; glycine biosynthesis; glycine from L-serine: step 1/1. Functionally, catalyzes the reversible interconversion of serine and glycine with tetrahydrofolate (THF) serving as the one-carbon carrier. This reaction serves as the major source of one-carbon groups required for the biosynthesis of purines, thymidylate, methionine, and other important biomolecules. Also exhibits THF-independent aldolase activity toward beta-hydroxyamino acids, producing glycine and aldehydes, via a retro-aldol mechanism. This Cyanothece sp. (strain PCC 7425 / ATCC 29141) protein is Serine hydroxymethyltransferase.